Consider the following 151-residue polypeptide: 3-dehydroquinate dehydratase (151 aa).

Residue Tyr24 is the Proton acceptor of the active site. Substrate-binding residues include Asn76, His82, and Asp89. The active-site Proton donor is the His102. Substrate is bound by residues 103–104 (LS) and Arg113.

This sequence belongs to the type-II 3-dehydroquinase family. Homododecamer.

The enzyme catalyses 3-dehydroquinate = 3-dehydroshikimate + H2O. It functions in the pathway metabolic intermediate biosynthesis; chorismate biosynthesis; chorismate from D-erythrose 4-phosphate and phosphoenolpyruvate: step 3/7. Functionally, catalyzes a trans-dehydration via an enolate intermediate. The polypeptide is 3-dehydroquinate dehydratase (Acinetobacter baumannii (strain ATCC 17978 / DSM 105126 / CIP 53.77 / LMG 1025 / NCDC KC755 / 5377)).